Consider the following 161-residue polypeptide: Regulatory protein RecX (161 aa).

This sequence belongs to the RecX family.

Its subcellular location is the cytoplasm. Functionally, modulates RecA activity. This Halorhodospira halophila (strain DSM 244 / SL1) (Ectothiorhodospira halophila (strain DSM 244 / SL1)) protein is Regulatory protein RecX.